The primary structure comprises 334 residues: E3 ubiquitin-protein ligase CIP8 (334 aa).

A disordered region spans residues 111–158; that stretch reads LNSRNEIDDDEDEDEDDGDEEEEDEEENLTVNDEEDEEDDLRRRNRFP. A compositionally biased stretch (acidic residues) spans 117–149; that stretch reads IDDDEDEDEDDGDEEEEDEEENLTVNDEEDEED. The RING-type; atypical zinc finger occupies 257 to 298; it reads CAVCKDGMVMGETGKKLPCGHCYHGDCIVPWLGTRNSCPVCR. A disordered region spans residues 307–334; the sequence is EYEEERKKRTSTVSDSAAASSSSSTSRY. Over residues 317–334 the composition is skewed to low complexity; it reads STVSDSAAASSSSSTSRY.

Interacts with the RING finger of COP1. Interacts with UBC8 through its N-terminal region. In terms of tissue distribution, expressed in both light- and dark-grown seedlings.

It is found in the cytoplasm. The enzyme catalyses S-ubiquitinyl-[E2 ubiquitin-conjugating enzyme]-L-cysteine + [acceptor protein]-L-lysine = [E2 ubiquitin-conjugating enzyme]-L-cysteine + N(6)-ubiquitinyl-[acceptor protein]-L-lysine.. It participates in protein modification; protein ubiquitination. In terms of biological role, E3 ubiquitin-protein ligase that mediates ubiquitination and subsequent proteasomal degradation of target proteins. Probably forms a minimal ubiquitin ligase complex in cooperation with the E2 enzyme UBC8. Its interaction with COP1 suggests that it may participate in proteasome-mediated degradation of HY5 in vivo. The polypeptide is E3 ubiquitin-protein ligase CIP8 (CIP8) (Arabidopsis thaliana (Mouse-ear cress)).